Reading from the N-terminus, the 102-residue chain is Methane monooxygenase component D (102 aa).

In terms of assembly, the soluble methane monooxygenase (sMMO) consists of four components A/MMOH (composed of alpha/MmoX, beta/MmoY and gamma/MmoZ), B/MMOB (MmoB), C/MMOR (MmoC) and D/MMOD (MmoD).

This chain is Methane monooxygenase component D (mmoD), found in Methylosinus trichosporium.